Consider the following 807-residue polypeptide: Glycerol-3-phosphate acyltransferase (807 aa).

The HXXXXD motif signature appears at C305–M310.

This sequence belongs to the GPAT/DAPAT family.

It localises to the cell inner membrane. It catalyses the reaction sn-glycerol 3-phosphate + an acyl-CoA = a 1-acyl-sn-glycero-3-phosphate + CoA. Its pathway is phospholipid metabolism; CDP-diacylglycerol biosynthesis; CDP-diacylglycerol from sn-glycerol 3-phosphate: step 1/3. The polypeptide is Glycerol-3-phosphate acyltransferase (Shigella boydii serotype 18 (strain CDC 3083-94 / BS512)).